Reading from the N-terminus, the 400-residue chain is tRNA(Met) cytidine acetate ligase (400 aa).

ATP contacts are provided by residues 7–20, Gly-102, Asn-165, and Arg-190; that span reads ITEY…HIYH.

This sequence belongs to the TmcAL family.

The protein localises to the cytoplasm. The catalysed reaction is cytidine(34) in elongator tRNA(Met) + acetate + ATP = N(4)-acetylcytidine(34) in elongator tRNA(Met) + AMP + diphosphate. Catalyzes the formation of N(4)-acetylcytidine (ac(4)C) at the wobble position of elongator tRNA(Met), using acetate and ATP as substrates. First activates an acetate ion to form acetyladenylate (Ac-AMP) and then transfers the acetyl group to tRNA to form ac(4)C34. This Clostridium novyi (strain NT) protein is tRNA(Met) cytidine acetate ligase.